Consider the following 203-residue polypeptide: Small ribosomal subunit protein uS4 (203 aa).

The S4 RNA-binding domain occupies 93–173 (RRFDNVVFRS…IPSWIQVDKA (81 aa)).

The protein belongs to the universal ribosomal protein uS4 family. As to quaternary structure, part of the 30S ribosomal subunit. Contacts protein S5. The interaction surface between S4 and S5 is involved in control of translational fidelity.

In terms of biological role, one of the primary rRNA binding proteins, it binds directly to 16S rRNA where it nucleates assembly of the body of the 30S subunit. Its function is as follows. With S5 and S12 plays an important role in translational accuracy. The chain is Small ribosomal subunit protein uS4 from Chlorobium phaeobacteroides (strain DSM 266 / SMG 266 / 2430).